Reading from the N-terminus, the 287-residue chain is Genetic interactor of prohibitin 7, mitochondrial (287 aa).

Residues 1–24 (MVLSNVKIFRLKSHRAFRIGPMIK) constitute a mitochondrion transit peptide. The helical transmembrane segment at 250–266 (SKAIISFVVFVSIYVWL) threads the bilayer.

It belongs to the GEP7 family.

The protein resides in the mitochondrion membrane. In terms of biological role, involved in respiratory growth and required for cell survival in the absence of prohibitins or GEM1. This chain is Genetic interactor of prohibitin 7, mitochondrial (GEP7), found in Saccharomyces cerevisiae (strain ATCC 204508 / S288c) (Baker's yeast).